Reading from the N-terminus, the 1004-residue chain is Ephrin type-B receptor 2 (1004 aa).

The signal sequence occupies residues 1–19 (MGPLWFCCLPLALLPLLAA). Topologically, residues 20-544 (VEETLMDSTT…QTSVQEKLPL (525 aa)) are extracellular. Residues 21–203 (EETLMDSTTA…FYRKCPRVIQ (183 aa)) enclose the Eph LBD domain. 2 cysteine pairs are disulfide-bonded: cysteine 63/cysteine 185 and cysteine 98/cysteine 108. 5 N-linked (GlcNAc...) asparagine glycosylation sites follow: asparagine 266, asparagine 337, asparagine 429, asparagine 478, and asparagine 483. 2 consecutive Fibronectin type-III domains span residues 325-435 (IPSA…TNQA) and 436-531 (APSA…TMTE). The helical transmembrane segment at 545–565 (IIGSSAAGLVFLIAVVVIIIV) threads the bilayer. The Cytoplasmic segment spans residues 566–1004 (CNRRRGFERA…QMNQIQSVEV (439 aa)). The Protein kinase domain occupies 639-902 (VKIEQVIGAG…QIVNTLDKMI (264 aa)). ATP is bound by residues 645–653 (IGAGEFGEV) and lysine 671. Aspartate 764 (proton acceptor) is an active-site residue. Residues 931-995 (TSFNTVDEWL…LNSIQVMRAQ (65 aa)) enclose the SAM domain. The PDZ-binding motif lies at 1002 to 1004 (VEV).

This sequence belongs to the protein kinase superfamily. Tyr protein kinase family. Ephrin receptor subfamily. As to quaternary structure, heterotetramer upon binding of the ligand. The heterotetramer is composed of an ephrin dimer and a receptor dimer. Oligomerization is probably required to induce biological responses. Ligand binding induces cleavage by matrix metalloproteinases (MMPs) such as MMP7/MMP9, producing an EphB2/N-terminal fragment (NTF) and a C-terminal long fragment (EphB2-LF). EphB2-LF is further cleaved by MMPs, producing EphB2/CTF1 which is further cleaved by the PS1/gamma-secretase producing EphB2/CTF2. In terms of tissue distribution, wide tissue distribution throughout development and sustained expression in adult brain. The longer form (CEK5+) is specifically expressed in the central nervous system.

It localises to the cell membrane. The protein localises to the cell projection. The protein resides in the axon. It is found in the dendrite. It catalyses the reaction L-tyrosyl-[protein] + ATP = O-phospho-L-tyrosyl-[protein] + ADP + H(+). Receptor tyrosine kinase which binds promiscuously transmembrane ephrin-B family ligands residing on adjacent cells, leading to contact-dependent bidirectional signaling into neighboring cells. The signaling pathway downstream of the receptor is referred to as forward signaling while the signaling pathway downstream of the ephrin ligand is referred to as reverse signaling. Functions in axon guidance during development. In addition to axon guidance, also regulates dendritic spines development and maturation and stimulates the formation of excitatory synapses. This is Ephrin type-B receptor 2 (EPHB2) from Gallus gallus (Chicken).